The primary structure comprises 325 residues: NADH-quinone oxidoreductase subunit H (325 aa).

A run of 8 helical transmembrane segments spans residues 11 to 31 (ILISVLKAVVILLVVVTCGAF), 81 to 101 (AIFTLAPVIAFTSLLLSFAIV), 114 to 134 (IGILFFLMMAGLAVYAVLFAG), 154 to 174 (LSYEVFLGLSLMGVVAQAGSF), 186 to 206 (VWNVIPQFFGFVTFAIAGVAV), 237 to 257 (FFVGEYIGIVTVSALIVTLFF), 265 to 285 (LPPFIWFALKTAFFMVMFILI), and 304 to 324 (VCLPLTLLNLLATAAVILYNA).

The protein belongs to the complex I subunit 1 family. As to quaternary structure, NDH-1 is composed of 13 different subunits. Subunits NuoA, H, J, K, L, M, N constitute the membrane sector of the complex.

The protein resides in the cell inner membrane. It carries out the reaction a quinone + NADH + 5 H(+)(in) = a quinol + NAD(+) + 4 H(+)(out). NDH-1 shuttles electrons from NADH, via FMN and iron-sulfur (Fe-S) centers, to quinones in the respiratory chain. The immediate electron acceptor for the enzyme in this species is believed to be ubiquinone. Couples the redox reaction to proton translocation (for every two electrons transferred, four hydrogen ions are translocated across the cytoplasmic membrane), and thus conserves the redox energy in a proton gradient. This subunit may bind ubiquinone. This Yersinia enterocolitica serotype O:8 / biotype 1B (strain NCTC 13174 / 8081) protein is NADH-quinone oxidoreductase subunit H.